The following is a 286-amino-acid chain: Co-chaperone protein DjlA (286 aa).

At 1 to 6 (MQFIGK) the chain is on the periplasmic side. A helical transmembrane segment spans residues 7–31 (IIGFFIGYKLFGGLFGGLLGIFIGH). The Cytoplasmic segment spans residues 32-286 (LADKKLYELG…DLICKTKGWK (255 aa)). One can recognise a J domain in the interval 220–286 (DAYTVLGINE…DLICKTKGWK (67 aa)).

In terms of assembly, homodimer.

The protein resides in the cell inner membrane. Functionally, regulatory DnaK co-chaperone. Direct interaction between DnaK and DjlA is needed for the induction of the wcaABCDE operon, involved in the synthesis of a colanic acid polysaccharide capsule, possibly through activation of the RcsB/RcsC phosphotransfer signaling pathway. The colanic acid capsule may help the bacterium survive conditions outside the host. The chain is Co-chaperone protein DjlA from Haemophilus ducreyi (strain 35000HP / ATCC 700724).